The following is a 274-amino-acid chain: MAD2L1-binding protein (274 aa).

The interaction with MAD2L1 stretch occupies residues 45–78 (ASEAFCPRDCMVPVVFPGPVSQEGCCQFTCELLK). Position 102 is a phosphoserine (Ser-102).

It belongs to the MAD2L1BP family. As to quaternary structure, interacts with MAD2L1.

It is found in the nucleus. The protein localises to the cytoplasm. It localises to the cytoskeleton. The protein resides in the spindle. In terms of biological role, may function to silence the spindle checkpoint and allow mitosis to proceed through anaphase by binding MAD2L1 after it has become dissociated from the MAD2L1-CDC20 complex. This chain is MAD2L1-binding protein (MAD2L1BP), found in Homo sapiens (Human).